We begin with the raw amino-acid sequence, 239 residues long: Flagellar L-ring protein (239 aa).

A signal peptide spans 1 to 16 (MKPVILATASALLLAA). A lipid anchor (N-palmitoyl cysteine) is attached at Cys17. Cys17 carries the S-diacylglycerol cysteine lipid modification. A compositionally biased stretch (polar residues) spans 120-138 (SGSTSGSASGNLGLTGDTS). The tract at residues 120–145 (SGSTSGSASGNLGLTGDTSTDGKGKI) is disordered.

It belongs to the FlgH family. As to quaternary structure, the basal body constitutes a major portion of the flagellar organelle and consists of four rings (L,P,S, and M) mounted on a central rod.

Its subcellular location is the cell outer membrane. It is found in the bacterial flagellum basal body. Its function is as follows. Assembles around the rod to form the L-ring and probably protects the motor/basal body from shearing forces during rotation. The sequence is that of Flagellar L-ring protein from Azorhizobium caulinodans (strain ATCC 43989 / DSM 5975 / JCM 20966 / LMG 6465 / NBRC 14845 / NCIMB 13405 / ORS 571).